Consider the following 247-residue polypeptide: 5'-nucleotidase SurE (247 aa).

A divalent metal cation is bound by residues Asp-8, Asp-9, Ser-39, and Asn-91.

It belongs to the SurE nucleotidase family. Requires a divalent metal cation as cofactor.

The protein localises to the cytoplasm. The catalysed reaction is a ribonucleoside 5'-phosphate + H2O = a ribonucleoside + phosphate. Nucleotidase that shows phosphatase activity on nucleoside 5'-monophosphates. In Aromatoleum aromaticum (strain DSM 19018 / LMG 30748 / EbN1) (Azoarcus sp. (strain EbN1)), this protein is 5'-nucleotidase SurE.